A 122-amino-acid polypeptide reads, in one-letter code: Large ribosomal subunit protein uL14 (122 aa).

Belongs to the universal ribosomal protein uL14 family. As to quaternary structure, part of the 50S ribosomal subunit. Forms a cluster with proteins L3 and L19. In the 70S ribosome, L14 and L19 interact and together make contacts with the 16S rRNA in bridges B5 and B8.

Functionally, binds to 23S rRNA. Forms part of two intersubunit bridges in the 70S ribosome. The polypeptide is Large ribosomal subunit protein uL14 (Laribacter hongkongensis (strain HLHK9)).